The following is a 332-amino-acid chain: 2,3-diketo-L-gulonate reductase (332 aa).

The active-site Proton donor is His-44. NAD(+) is bound by residues 168 to 174 (ITMVDMS), 224 to 225 (WK), and 304 to 306 (GHE).

This sequence belongs to the LDH2/MDH2 oxidoreductase family. DlgD subfamily. Homodimer.

It is found in the cytoplasm. The catalysed reaction is 3-dehydro-L-gulonate + NAD(+) = 2,3-dioxo-L-gulonate + NADH + H(+). It catalyses the reaction 3-dehydro-L-gulonate + NADP(+) = 2,3-dioxo-L-gulonate + NADPH + H(+). In terms of biological role, catalyzes the reduction of 2,3-diketo-L-gulonate in the presence of NADH, to form 3-keto-L-gulonate. The polypeptide is 2,3-diketo-L-gulonate reductase (Mannheimia succiniciproducens (strain KCTC 0769BP / MBEL55E)).